A 205-amino-acid polypeptide reads, in one-letter code: Holliday junction branch migration complex subunit RuvA (205 aa).

The segment at 1 to 62 is domain I; that stretch reads MFEYVTGYVE…EDIMALYGFK (62 aa). A domain II region spans residues 63–141; the sequence is TREERLLFTK…DVVPDVFVDL (79 aa). Positions 142–152 are flexible linker; it reads FSDEERFDEKK. Residues 153–205 are domain III; the sequence is GSSTELDEALEALRALGYAEREINRVLPELLKESLTTDQYIKKALSLLLNGKR.

It belongs to the RuvA family. In terms of assembly, homotetramer. Forms an RuvA(8)-RuvB(12)-Holliday junction (HJ) complex. HJ DNA is sandwiched between 2 RuvA tetramers; dsDNA enters through RuvA and exits via RuvB. An RuvB hexamer assembles on each DNA strand where it exits the tetramer. Each RuvB hexamer is contacted by two RuvA subunits (via domain III) on 2 adjacent RuvB subunits; this complex drives branch migration. In the full resolvosome a probable DNA-RuvA(4)-RuvB(12)-RuvC(2) complex forms which resolves the HJ.

The protein localises to the cytoplasm. Functionally, the RuvA-RuvB-RuvC complex processes Holliday junction (HJ) DNA during genetic recombination and DNA repair, while the RuvA-RuvB complex plays an important role in the rescue of blocked DNA replication forks via replication fork reversal (RFR). RuvA specifically binds to HJ cruciform DNA, conferring on it an open structure. The RuvB hexamer acts as an ATP-dependent pump, pulling dsDNA into and through the RuvAB complex. HJ branch migration allows RuvC to scan DNA until it finds its consensus sequence, where it cleaves and resolves the cruciform DNA. The protein is Holliday junction branch migration complex subunit RuvA of Bacillus cytotoxicus (strain DSM 22905 / CIP 110041 / 391-98 / NVH 391-98).